We begin with the raw amino-acid sequence, 198 residues long: Probable GTP-binding protein EngB (198 aa).

Residues 22-195 (DLPEIALAGR…WKAIHKFTKT (174 aa)) form the EngB-type G domain. GTP is bound by residues 30–37 (GRSNVGKS), 57–61 (GKTQT), 75–78 (DVPG), 142–145 (TKAD), and 174–176 (FSS). Positions 37 and 59 each coordinate Mg(2+).

It belongs to the TRAFAC class TrmE-Era-EngA-EngB-Septin-like GTPase superfamily. EngB GTPase family. Requires Mg(2+) as cofactor.

Functionally, necessary for normal cell division and for the maintenance of normal septation. The chain is Probable GTP-binding protein EngB from Bacillus cytotoxicus (strain DSM 22905 / CIP 110041 / 391-98 / NVH 391-98).